A 249-amino-acid polypeptide reads, in one-letter code: LTEVETYVLSIVPSGPLKAEIAQRLEDVFAGKNTDLEALMEWLKTRPILSPLTKGILGFVFTLTVPSERGLQRRRFVQNALNGNGDPNNMDRAVKLYRKLKREITFHGAKEIALSYSAGALASCMGLIYNRMGAVTTESAFGLICATCEQIADSQHKSHRQMVTTTNPLIRHENRMVLASTTAKAMEQMAGSSEQAAEAMEVASQARQMVQAMRAIGTHPSSSTGLKNDLLENLQAYQKRMGVQMQRFK.

Positions 1 to 161 are membrane-binding; sequence LTEVETYVLS…ADSQHKSHRQ (161 aa). The Nuclear localization signal signature appears at 98–102; that stretch reads RKLKR. Residues 162-249 form an RNP-binding region; the sequence is MVTTTNPLIR…RMGVQMQRFK (88 aa).

It belongs to the influenza viruses Matrix protein M1 family. In terms of assembly, homodimer and homomultimer. Interacts with NEP. Binds ribonucleocapsid by both interacting with genomic RNA and NP protein. May interact with HA and NA. Cannot bind NP without genomic RNA.

Its subcellular location is the virion membrane. It is found in the host nucleus. Its function is as follows. Plays critical roles in virus replication, from virus entry and uncoating to assembly and budding of the virus particle. M1 binding to ribonucleocapsids (RNPs) in nucleus seems to inhibit viral transcription. Interaction of viral NEP with M1-RNP is thought to promote nuclear export of the complex, which is targeted to the virion assembly site at the apical plasma membrane in polarized epithelial cells. Interactions with NA and HA may bring M1, a non-raft-associated protein, into lipid rafts. Forms a continuous shell on the inner side of the lipid bilayer in virion, where it binds the RNP. During virus entry into cell, the M2 ion channel acidifies the internal virion core, inducing M1 dissociation from the RNP. M1-free RNPs are transported to the nucleus, where viral transcription and replication can take place. In terms of biological role, determines the virion's shape: spherical or filamentous. Clinical isolates of influenza are characterized by the presence of significant proportion of filamentous virions, whereas after multiple passage on eggs or cell culture, virions have only spherical morphology. Filamentous virions are thought to be important to infect neighboring cells, and spherical virions more suited to spread through aerosol between hosts organisms. The sequence is that of Matrix protein 1 (M) from Aves (Human).